The sequence spans 169 residues: MFTNTRTILIYNSKVMNTHTHTHTHTHTHIYIYTGDQVSVRGRLLSLKFFKVLKLFFPSPTSLATSHPPLSSMSPYMTIPQQYLYISKIRSKLSQCALTRHHHRELDLRKMVGHANMLDRILDEIDEIDSEVVLCDAADGSSTAEAHSASPASSDSSPLTNNIRPISIM.

The segment covering 144–157 (AEAHSASPASSDSS) has biased composition (low complexity). The segment at 144–169 (AEAHSASPASSDSSPLTNNIRPISIM) is disordered. Residues 158–169 (PLTNNIRPISIM) show a composition bias toward polar residues.

This is an uncharacterized protein from Saccharomyces cerevisiae (strain ATCC 204508 / S288c) (Baker's yeast).